The primary structure comprises 616 residues: MSKKKEASKISPVLFLDPGGQSMRFYVRPGPTKMQLHPLITSGGGNLCRNQEPGAILLIDPTDATNVTQNTGQKYISTKYILDCVEQNQQLDPNDYAIIIGPSVQTRMALRNQGSGRLGYSSEEDAAILKFIEKRQQDAKGNLVWKEMEKRHVTEHSWQSMKDRFLKHLQQKLADKPTKKSPIKRKPLSFTQSPLRKKKVVEISEDESVQKGDCPEAPMATETGSINPPASPERASSPPEEPQAAGQPSQASSNDSQDETCVLVIETPESENPRLDEDAPDASNEHSSLKKKRRKTCKTSTTDSRSSRLEEDPVGQDIPDESNAQSSPKKKRQKACKTSTTDSRSSRLEENPDRRDIPDESTEQSSPNKSQMTSKISTSDSGNPIGDQGCDNPHGCNANSSPSKTRQTNSEASTPDSKKLGILAKAAKEFEDSDVMDDSEECENPCEVPIAEPSDAQESSATPATLVREPESQAEHHEETQPDSPMSEEERPGPSSAVVPPSLNSSTSCSHIRETPEETLSRDLLEVKEQVINLMRETKKDLVEVTKALLKASGDLKRAQVFLLNGYDHETHGPLWTRLDDETLLAADPYELEQLQSKFGEEEVTRRKSFLATDVK.

Residues 15 to 98 (FLDPGGQSMR…QQLDPNDYAI (84 aa)) form the BRCT domain. Positions 112–169 (NQGSGRLGYSSEEDAAILKFIEKRQQDAKGNLVWKEMEKRHVTEHSWQSMKDRFLKHL) constitute a Myb-like domain. A disordered region spans residues 174–518 (ADKPTKKSPI…CSHIRETPEE (345 aa)). A compositionally biased stretch (low complexity) spans 232–245 (PERASSPPEEPQAA). The segment covering 246–255 (GQPSQASSND) has biased composition (polar residues). 2 stretches are compositionally biased toward basic and acidic residues: residues 271–288 (ENPR…EHSS) and 344–358 (RSSR…RDIP). Composition is skewed to polar residues over residues 363 to 382 (EQSS…SDSG) and 397 to 415 (NANS…ASTP). A compositionally biased stretch (acidic residues) spans 431–444 (EDSDVMDDSEECEN). A compositionally biased stretch (basic and acidic residues) spans 468 to 480 (REPESQAEHHEET). The Nuclear localization signal signature appears at 597-613 (SKFGEEEVTRRKSFLAT).

It belongs to the RAP1 family. As to quaternary structure, homodimer. Component of the shelterin complex (telosome). Interacts with terf2; the interaction is direct.

It localises to the nucleus. It is found in the chromosome. The protein localises to the telomere. Its function is as follows. Acts both as a regulator of telomere function and as a transcription regulator. Involved in the regulation of telomere length and protection as a component of the shelterin complex (telosome). Does not bind DNA directly: recruited to telomeric double-stranded 5'-TTAGGG-3' repeats via its interaction with terf2. Independently of its function in telomeres, also acts as a transcription regulator: recruited to extratelomeric 5'-TTAGGG-3' sites via its association with terf2 or other factors, and regulates gene expression. The polypeptide is Telomeric repeat-binding factor 2-interacting protein 1 (terf2ip) (Danio rerio (Zebrafish)).